The following is a 204-amino-acid chain: Outer-membrane lipoprotein LolB (204 aa).

The first 16 residues, 1–16 (MLRHLLVFSLIALLAG), serve as a signal peptide directing secretion. Cys17 carries N-palmitoyl cysteine lipidation. Residue Cys17 is the site of S-diacylglycerol cysteine attachment.

It belongs to the LolB family. As to quaternary structure, monomer.

The protein resides in the cell outer membrane. Its function is as follows. Plays a critical role in the incorporation of lipoproteins in the outer membrane after they are released by the LolA protein. This Ectopseudomonas mendocina (strain ymp) (Pseudomonas mendocina) protein is Outer-membrane lipoprotein LolB.